The primary structure comprises 129 residues: MASRLLRGAGALAAQALRARGPSGAAAVRSMASGGGVPTDEEQATGLEREIMLAAKKGLDPYNVLAPKGASGTREDPNLVPSISNKRIVGCICEEDNTSVVWFWLHKGEAQRCPRCGAHYKLVPQQLAH.

The N-terminal 31 residues, 1–31 (MASRLLRGAGALAAQALRARGPSGAAAVRSM), are a transit peptide targeting the mitochondrion. N6-acetyllysine occurs at positions 68 and 86. Zn(2+)-binding residues include C91, C93, C113, and C116. Residue K121 is modified to N6-acetyllysine.

This sequence belongs to the cytochrome c oxidase subunit 5B family. Component of the cytochrome c oxidase (complex IV, CIV), a multisubunit enzyme composed of 14 subunits. The complex is composed of a catalytic core of 3 subunits MT-CO1, MT-CO2 and MT-CO3, encoded in the mitochondrial DNA, and 11 supernumerary subunits COX4I, COX5A, COX5B, COX6A, COX6B, COX6C, COX7A, COX7B, COX7C, COX8 and NDUFA4, which are encoded in the nuclear genome. The complex exists as a monomer or a dimer and forms supercomplexes (SCs) in the inner mitochondrial membrane with NADH-ubiquinone oxidoreductase (complex I, CI) and ubiquinol-cytochrome c oxidoreductase (cytochrome b-c1 complex, complex III, CIII), resulting in different assemblies (supercomplex SCI(1)III(2)IV(1) and megacomplex MCI(2)III(2)IV(2)).

The protein localises to the mitochondrion inner membrane. Its pathway is energy metabolism; oxidative phosphorylation. In terms of biological role, component of the cytochrome c oxidase, the last enzyme in the mitochondrial electron transport chain which drives oxidative phosphorylation. The respiratory chain contains 3 multisubunit complexes succinate dehydrogenase (complex II, CII), ubiquinol-cytochrome c oxidoreductase (cytochrome b-c1 complex, complex III, CIII) and cytochrome c oxidase (complex IV, CIV), that cooperate to transfer electrons derived from NADH and succinate to molecular oxygen, creating an electrochemical gradient over the inner membrane that drives transmembrane transport and the ATP synthase. Cytochrome c oxidase is the component of the respiratory chain that catalyzes the reduction of oxygen to water. Electrons originating from reduced cytochrome c in the intermembrane space (IMS) are transferred via the dinuclear copper A center (CU(A)) of subunit 2 and heme A of subunit 1 to the active site in subunit 1, a binuclear center (BNC) formed by heme A3 and copper B (CU(B)). The BNC reduces molecular oxygen to 2 water molecules using 4 electrons from cytochrome c in the IMS and 4 protons from the mitochondrial matrix. This Pongo abelii (Sumatran orangutan) protein is Cytochrome c oxidase subunit 5B, mitochondrial (COX5B).